The following is a 147-amino-acid chain: Cyanate hydratase (147 aa).

Catalysis depends on residues R88, E91, and S114.

The protein belongs to the cyanase family.

It catalyses the reaction cyanate + hydrogencarbonate + 3 H(+) = NH4(+) + 2 CO2. In terms of biological role, catalyzes the reaction of cyanate with bicarbonate to produce ammonia and carbon dioxide. The protein is Cyanate hydratase of Parasynechococcus marenigrum (strain WH8102).